A 298-amino-acid chain; its full sequence is Short-chain dehydrogenase/reductase prx6 (298 aa).

Residues isoleucine 27, aspartate 70, asparagine 97, tyrosine 174, lysine 178, valine 208, and threonine 210 each contribute to the NADP(+) site. Catalysis depends on tyrosine 174, which acts as the Proton acceptor. Lysine 178 serves as the catalytic Lowers pKa of active site Tyr.

Belongs to the short-chain dehydrogenases/reductases (SDR) family.

It participates in sesquiterpene biosynthesis. Functionally, short-chain dehydrogenase/reductase; part of the gene cluster that mediates the biosynthesis of PR-toxin, a bicyclic sesquiterpene belonging to the eremophilane class and acting as a mycotoxin. The first step of the pathway is catalyzed by the aristolochene synthase which performs the cyclization of trans,trans-farnesyl diphosphate (FPP) to the bicyclic sesquiterpene aristolochene. Following the formation of aristolochene, the non-oxygenated aristolochene is converted to the trioxygenated intermediate eremofortin B, via 7-epi-neopetasone. This conversion appears to involve three enzymes, a hydroxysterol oxidase-like enzyme, the quinone-oxidase prx3 that forms the quinone-type-structure in the bicyclic nucleus of aristolochene with the C8-oxo group and the C-3 hydroxyl group, and the P450 monooxygenase prx9 that introduces the epoxide at the double bond between carbons 1 and 2. No monoxy or dioxy-intermediates have been reported to be released to the broth, so these three early oxidative reactions may be coupled together. Eremofortin B is further oxidized by another P450 monooxygenase, that introduces a second epoxide between carbons 7 and 11 prior to acetylation to eremofortin A by the acetyltransferase prx11. The second epoxidation may be performed by a second P450 monooxygenase. After the acetylation step, eremofortin A is converted to eremofortin C and then to PR-toxin. First the conversion of eremofortin A to eremofortin C proceeds by oxidation of the side chain of the molecule at C-12 and is catalyzed by the short-chain oxidoreductase prx1. The cytochrome P450 monooxygenase prx8 also plays a role in this step. The primary alcohol formed at C-12 is finally oxidized by the short-chain alcohol dehydrogenase prx4 that forms PR-toxin. The sequence is that of Short-chain dehydrogenase/reductase prx6 from Penicillium rubens (strain ATCC 28089 / DSM 1075 / NRRL 1951 / Wisconsin 54-1255) (Penicillium chrysogenum).